The chain runs to 334 residues: ADP-L-glycero-D-manno-heptose-6-epimerase (334 aa).

NADP(+) contacts are provided by residues 11–12, 32–33, Lys-39, Lys-54, 77–81, and Asn-94; these read FI, DN, and QGACS. Catalysis depends on Tyr-141, which acts as the Proton acceptor. Lys-145 contributes to the NADP(+) binding site. Asn-171 contacts substrate. 2 residues coordinate NADP(+): Val-172 and Lys-180. The Proton acceptor role is filled by Lys-180. Residues Arg-182, His-189, 203–206, Arg-216, and Tyr-295 contribute to the substrate site; that span reads FGSN.

The protein belongs to the NAD(P)-dependent epimerase/dehydratase family. HldD subfamily. Homopentamer. Requires NADP(+) as cofactor.

It carries out the reaction ADP-D-glycero-beta-D-manno-heptose = ADP-L-glycero-beta-D-manno-heptose. It functions in the pathway nucleotide-sugar biosynthesis; ADP-L-glycero-beta-D-manno-heptose biosynthesis; ADP-L-glycero-beta-D-manno-heptose from D-glycero-beta-D-manno-heptose 7-phosphate: step 4/4. Its function is as follows. Catalyzes the interconversion between ADP-D-glycero-beta-D-manno-heptose and ADP-L-glycero-beta-D-manno-heptose via an epimerization at carbon 6 of the heptose. The protein is ADP-L-glycero-D-manno-heptose-6-epimerase of Neisseria meningitidis serogroup C / serotype 2a (strain ATCC 700532 / DSM 15464 / FAM18).